A 278-amino-acid polypeptide reads, in one-letter code: Nucleotide-binding protein Tmel_1373 (278 aa).

Residue Gly10–Ser17 participates in ATP binding. Asp58–Ser61 lines the GTP pocket.

The protein belongs to the RapZ-like family.

Its function is as follows. Displays ATPase and GTPase activities. The polypeptide is Nucleotide-binding protein Tmel_1373 (Thermosipho melanesiensis (strain DSM 12029 / CIP 104789 / BI429)).